The chain runs to 273 residues: Dermonecrotic toxin SdSicTox-betaIIB1bxi (273 aa).

The active site involves histidine 4. Mg(2+) contacts are provided by glutamate 24 and aspartate 26. Histidine 40 functions as the Nucleophile in the catalytic mechanism. Cystine bridges form between cysteine 44–cysteine 50 and cysteine 46–cysteine 189. Aspartate 84 contributes to the Mg(2+) binding site.

The protein belongs to the arthropod phospholipase D family. Class II subfamily. It depends on Mg(2+) as a cofactor. As to expression, expressed by the venom gland.

The protein localises to the secreted. It catalyses the reaction an N-(acyl)-sphingosylphosphocholine = an N-(acyl)-sphingosyl-1,3-cyclic phosphate + choline. The catalysed reaction is an N-(acyl)-sphingosylphosphoethanolamine = an N-(acyl)-sphingosyl-1,3-cyclic phosphate + ethanolamine. It carries out the reaction a 1-acyl-sn-glycero-3-phosphocholine = a 1-acyl-sn-glycero-2,3-cyclic phosphate + choline. The enzyme catalyses a 1-acyl-sn-glycero-3-phosphoethanolamine = a 1-acyl-sn-glycero-2,3-cyclic phosphate + ethanolamine. Dermonecrotic toxins cleave the phosphodiester linkage between the phosphate and headgroup of certain phospholipids (sphingolipid and lysolipid substrates), forming an alcohol (often choline) and a cyclic phosphate. This toxin acts on sphingomyelin (SM). It may also act on ceramide phosphoethanolamine (CPE), lysophosphatidylcholine (LPC) and lysophosphatidylethanolamine (LPE), but not on lysophosphatidylserine (LPS), and lysophosphatidylglycerol (LPG). It acts by transphosphatidylation, releasing exclusively cyclic phosphate products as second products. Induces dermonecrosis, hemolysis, increased vascular permeability, edema, inflammatory response, and platelet aggregation. This is Dermonecrotic toxin SdSicTox-betaIIB1bxi from Sicarius cf. damarensis (strain GJB-2008) (Six-eyed sand spider).